A 1519-amino-acid polypeptide reads, in one-letter code: MEPEPVEDCVQSTLAALYPPFEATAPTLLGQVFQVVERTYREDALRYTLDFLVPAKHLLAKVQQEACAQYSGFLFFHEGWPLCLHEQVVVQLAALPWQLLRPGDFYLQVVPSAAQAPRLALKCLAPGGGRVQEVPVPNEACAYLFTPEWLQGINKDRPTGRLSTCLLSAPSGIQRLPWAELICPRFVHKEGLMVGHQPSTLPPELPSGPPGLPSPPLPEEALGTRSPGDGHNAPVEGPEGEYVELLEVTLPVRGSPTDAEGSPGLSRVRTVPTRKGAGGKGRHRRHRAWMHQKGLGPRGQDGARPPGEGSSTGASPESPPGAEAVPEAAVLEVSEPPAEAVGEASGSCPLRPGELRGGGGGGQGAEGPPGTPRRTGKGNRRKKRAAGRGALSRGGDSAPLSPGDKEDASHQEALGNLPSPSEHKLPECHLVKEEYEGSGKPESEPKELKTAGEKEPQLSEACGPTEEGAGERELEGPGLLCMAGHTGPEGPLSDTPTPPLETVQEGKGDNIPEEALAVSVSDHPDVAWDLMASGFLILTGGVDQSGRALLTITPPCPPEEPPPSRDTLNTTLHYLHSLLRPDLQTLGLSVLLDLRQAPPLPPALIPALSQLQDSGDPPLVQRLLILIHDDLPTELCGFQGAEVLSENDLKRVAKPEELQWELGGHRDPSPSHWVEIHQEVVRLCRLCQGVLGSVRQAIEELEGAAEPEEEEAVGMPKPLQKVLADPRLTALQRDGGAILMRLRSTPSSKLEGQGPATLYQEVDEAIHQLVRLSNLHVQQQEQRQCLRRLQQVLQWLSGPGEEQLASFAMPGDTLSALQETELRFRAFSAEVQERLAQAREALALEENATSQKVLDIFEQRLEQVESGLHRALRLQRFFQQAHEWVDEGFARLAGAGPGREAVLAALALRRAPEPSAGTFQEMRALALDLGSPAALREWGRCQARCQELERRIQQHVGEEASPRGYRRRRADGASSGGAQWGPRSPSPSLSSLLLPSSPGPRPAPSHCSLAPCGEDYEEEGPELAPEAEGRPPRAVLIRGLEVTSTEVVDRTCSPREHVLLGRARGPDGPWGVGTPRMERKRSISAQQRLVSELIACEQDYVATLSEPVPPPGPELTPELRGTWAAALSARERLRSFHRTHFLRELQGCATHPLRIGACFLRHGDQFSLYAQYVKHRHKLENGLAALSPLSKGSMEAGPYLPRALQQPLEQLTRYGRLLEELLREAGPELSSECRALGAAVQLLREQEARGRDLLAVEAVRGCEIDLKEQGQLLHRDPFTVICGRKKCLRHVFLFEHLLLFSKLKGPEGGSEMFVYKQAFKTADMGLTENIGDSGLCFELWFRRRRAREAYTLQATSPEIKLKWTSSIAQLLWRQAAHNKELRVQQMVSMGIGNKPFLDIKALGERTLSALLTGRAARTRASVAVSSFEHAGPSLPGLSPGACSLPARVEEEAWDLDVKQISLAPETLDSSGDVSPGPRNSPSLQPPHPGSSTPTLASRGILGLSRQSHARALSDPTTPL.

Disordered stretches follow at residues Val194–Gly237 and Arg253–Val503. Positions Thr200–Pro218 are enriched in pro residues. A Phosphoserine modification is found at Ser262. A compositionally biased stretch (basic residues) spans Lys280–Met290. Residues Ala314 to Val341 are compositionally biased toward low complexity. Gly residues predominate over residues Leu355 to Gly367. A Phosphothreonine modification is found at Thr371. A compositionally biased stretch (basic residues) spans Arg374–Ala386. Ser419 bears the Phosphoserine mark. Basic and acidic residues predominate over residues Ser421 to Gln457. The stretch at Ser828 to Ala871 forms a coiled coil. Phosphoserine is present on residues Ser931 and Ser961. Positions Ala934–Ser961 form a coiled coil. Positions His955–Pro1031 are disordered. Positions Trp980–Ser996 are enriched in low complexity. Ser1082 bears the Phosphoserine mark. A DH domain is found at Ala1085 to Leu1253. In terms of domain architecture, PH spans Asp1265 to Trp1372. 3 positions are modified to phosphoserine: Ser1433, Ser1438, and Ser1474. Residues Thr1466–Leu1519 form a disordered region. The span at Leu1467–Ser1482 shows a compositional bias: polar residues. Thr1492 carries the post-translational modification Phosphothreonine.

As to expression, expressed at higher level in the central nervous system and skeletal muscle and greater abundance in fetal than adult brain (at protein level).

Its subcellular location is the cytoplasm. May act as a guanine nucleotide exchange factor (GEF). The sequence is that of Rho guanine nucleotide exchange factor 40 (ARHGEF40) from Homo sapiens (Human).